A 370-amino-acid chain; its full sequence is Aminomethyltransferase (370 aa).

This sequence belongs to the GcvT family. In terms of assembly, the glycine cleavage system is composed of four proteins: P, T, L and H.

The enzyme catalyses N(6)-[(R)-S(8)-aminomethyldihydrolipoyl]-L-lysyl-[protein] + (6S)-5,6,7,8-tetrahydrofolate = N(6)-[(R)-dihydrolipoyl]-L-lysyl-[protein] + (6R)-5,10-methylene-5,6,7,8-tetrahydrofolate + NH4(+). Its function is as follows. The glycine cleavage system catalyzes the degradation of glycine. In Clostridium botulinum (strain Okra / Type B1), this protein is Aminomethyltransferase.